The sequence spans 296 residues: Acetyl-coenzyme A carboxylase carboxyl transferase subunit beta (296 aa).

Residues 25–294 form the CoA carboxyltransferase N-terminal domain; it reads VWTKCTSCEQ…PFVEPELISE (270 aa). Zn(2+) contacts are provided by Cys29, Cys32, Cys48, and Cys51. The C4-type zinc-finger motif lies at 29–51; the sequence is CTSCEQVLYSEELKRNLYVCPKC.

It belongs to the AccD/PCCB family. In terms of assembly, acetyl-CoA carboxylase is a heterohexamer composed of biotin carboxyl carrier protein (AccB), biotin carboxylase (AccC) and two subunits each of ACCase subunit alpha (AccA) and ACCase subunit beta (AccD). It depends on Zn(2+) as a cofactor.

Its subcellular location is the cytoplasm. The catalysed reaction is N(6)-carboxybiotinyl-L-lysyl-[protein] + acetyl-CoA = N(6)-biotinyl-L-lysyl-[protein] + malonyl-CoA. The protein operates within lipid metabolism; malonyl-CoA biosynthesis; malonyl-CoA from acetyl-CoA: step 1/1. Its function is as follows. Component of the acetyl coenzyme A carboxylase (ACC) complex. Biotin carboxylase (BC) catalyzes the carboxylation of biotin on its carrier protein (BCCP) and then the CO(2) group is transferred by the transcarboxylase to acetyl-CoA to form malonyl-CoA. This Haemophilus influenzae (strain PittEE) protein is Acetyl-coenzyme A carboxylase carboxyl transferase subunit beta.